The sequence spans 200 residues: Holliday junction resolvase RecU (200 aa).

Residues threonine 82, aspartate 84, glutamate 97, and glutamine 116 each coordinate Mg(2+).

Belongs to the RecU family. It depends on Mg(2+) as a cofactor.

It localises to the cytoplasm. The enzyme catalyses Endonucleolytic cleavage at a junction such as a reciprocal single-stranded crossover between two homologous DNA duplexes (Holliday junction).. Functionally, endonuclease that resolves Holliday junction intermediates in genetic recombination. Cleaves mobile four-strand junctions by introducing symmetrical nicks in paired strands. Promotes annealing of linear ssDNA with homologous dsDNA. Required for DNA repair, homologous recombination and chromosome segregation. In Streptococcus gordonii (strain Challis / ATCC 35105 / BCRC 15272 / CH1 / DL1 / V288), this protein is Holliday junction resolvase RecU.